Reading from the N-terminus, the 602-residue chain is Cytoskeleton-associated protein 4 (602 aa).

Residues 1–83 (MPSAKQRGSK…GGGGKSSSSS (83 aa)) form a disordered region. Residues 1-106 (MPSAKQRGSK…SASCSRRLGR (106 aa)) are Cytoplasmic-facing. Ser3, Ser17, and Ser19 each carry phosphoserine. The residue at position 21 (Lys21) is an N6-acetyllysine. Over residues 35-52 (KPPPAPQQPPPPPAPHPQ) the composition is skewed to pro residues. The segment covering 53–64 (QHPQQHPQNQAH) has biased composition (low complexity). Cys100 carries S-palmitoyl cysteine; by ZDHHC2 lipidation. Residues 107-127 (ALNFLFYLALVAAAAFSGWCV) traverse the membrane as a helical segment. Residues 128-602 (HHVLEEVQQV…VKVEKIHEKV (475 aa)) are Extracellular-facing. Residues 130 to 214 (VLEEVQQVRR…QKLQNEILKD (85 aa)) adopt a coiled-coil conformation. Ser232 is modified (phosphoserine; by FAM20C). 2 coiled-coil regions span residues 256–460 (TEVQ…GLGS) and 533–602 (LSSL…HEKV). The residue at position 312 (Ser312) is a Phosphoserine.

In terms of assembly, interacts with REEP5. In terms of processing, reversibly palmitoylated. Palmitoylation at Cys-100 by ZDHHC2 is required for its trafficking from the ER to the plasma membrane and for its perinuclear localization. Palmitoylation by ZDHHC2 is also required for its function in APF-mediated antiproliferative signaling. Increased phosphorylation during mitosis prevents binding to microtubules.

The protein localises to the endoplasmic reticulum membrane. Its subcellular location is the cell membrane. It is found in the cytoplasm. The protein resides in the cytoskeleton. It localises to the perinuclear region. Functionally, mediates the anchoring of the endoplasmic reticulum to microtubules. In terms of biological role, high-affinity epithelial cell surface receptor for the FZD8-related low molecular weight sialoglycopeptide APF/antiproliferative factor. Mediates the APF antiproliferative signaling within cells. This Homo sapiens (Human) protein is Cytoskeleton-associated protein 4 (CKAP4).